The primary structure comprises 576 residues: DM7 family protein GD16138 (576 aa).

The segment at 454–481 (FPELEPDSEPEPEPEPQTEDEGEDEGDK) is disordered. Acidic residues predominate over residues 457 to 478 (LEPDSEPEPEPEPQTEDEGEDE).

Belongs to the DM7 family.

In Drosophila simulans (Fruit fly), this protein is DM7 family protein GD16138.